Reading from the N-terminus, the 123-residue chain is Large ribosomal subunit protein uL29x (123 aa).

Belongs to the universal ribosomal protein uL29 family.

This chain is Large ribosomal subunit protein uL29x (RPL35C), found in Arabidopsis thaliana (Mouse-ear cress).